The sequence spans 396 residues: DNA polymerase interacting tetratricopeptide repeat-containing, protein of 47 kDa (396 aa).

3 TPR repeats span residues 91-124 (ALNYKEDGNFYMKHKKFRMAIYSFTEGIKTKTDN), 129-162 (AVLYNNRSAAHFFIKNYRSSLSDAQRALFYKPDY), and 163-196 (TKARWRSAQCAYELERFDLCTQMCEELLEVDVDN).

It belongs to the TTC4 family. In terms of assembly, forms a complex with Hsp83 and Hsp70aa. Interacts with DNApol-alpha180; the interaction inhibits the activity of the DNA polymerase and occurs only in proliferating cells but not in quiescent cells. More abundant in young embryos, pupae and females and a lower level expression seen in late embryos, larvae and males.

Its subcellular location is the nucleus. The protein localises to the nucleoplasm. The protein resides in the cytoplasm. Its function is as follows. May act as a co-chaperone for HSP83. The chain is DNA polymerase interacting tetratricopeptide repeat-containing, protein of 47 kDa (Dpit47) from Drosophila melanogaster (Fruit fly).